We begin with the raw amino-acid sequence, 152 residues long: D-erythrulose-4-phosphate isomerase 2 (152 aa).

The active-site Proton acceptor is the Cys70.

This sequence belongs to the LacAB/RpiB family.

It carries out the reaction D-erythrulose 4-phosphate = D-erythrose 4-phosphate. It participates in carbohydrate metabolism; erythritol degradation. Its pathway is carbohydrate metabolism; D-threitol degradation. It functions in the pathway carbohydrate metabolism; L-threitol degradation. Functionally, catalyzes the isomerization of D-erythrulose-4P to D-erythrose-4P. Involved in the degradation pathways of L-threitol, D-threitol and erythritol, that allow M.smegmatis to grow on these compounds as the sole carbon source. The protein is D-erythrulose-4-phosphate isomerase 2 of Mycolicibacterium smegmatis (strain ATCC 700084 / mc(2)155) (Mycobacterium smegmatis).